A 115-amino-acid chain; its full sequence is Double-headed protease inhibitor, submandibular gland (115 aa).

Kazal-like domains follow at residues Ile-6 to Ile-66 and Glu-67 to Cys-115. 6 cysteine pairs are disulfide-bonded: Cys-12-Cys-46, Cys-24-Cys-43, Cys-32-Cys-64, Cys-68-Cys-97, Cys-75-Cys-94, and Cys-83-Cys-115.

The protein localises to the secreted. Its function is as follows. This inhibitor is composed of two homologous actively inhibiting halves: one which inhibits trypsin, the other which inhibits elastase. This Canis lupus familiaris (Dog) protein is Double-headed protease inhibitor, submandibular gland.